Reading from the N-terminus, the 327-residue chain is D-alanine--D-alanine ligase (327 aa).

The ATP-grasp domain occupies 113 to 312 (KRLWMTYGLA…YEDFVMQVVA (200 aa)). 139-194 (AADLGLPLIVKPAREGSSIGLTKVTAADQMRAAFEKAAALDNDVIAETFIDGAELT) lines the ATP pocket. Mg(2+)-binding residues include Asp266, Glu279, and Asn281.

It belongs to the D-alanine--D-alanine ligase family. Mg(2+) is required as a cofactor. The cofactor is Mn(2+).

The protein resides in the cytoplasm. It carries out the reaction 2 D-alanine + ATP = D-alanyl-D-alanine + ADP + phosphate + H(+). Its pathway is cell wall biogenesis; peptidoglycan biosynthesis. Cell wall formation. The protein is D-alanine--D-alanine ligase of Cupriavidus necator (strain ATCC 17699 / DSM 428 / KCTC 22496 / NCIMB 10442 / H16 / Stanier 337) (Ralstonia eutropha).